Reading from the N-terminus, the 82-residue chain is MEREKIFQELKNILKDTVTVEEEEITMESDLVNDLNLDSLDLVDLALSVEQVFGFEFSDEQLQQIKTVKDVVDIIESNLYTK.

In terms of domain architecture, Carrier spans 4-79; it reads EKIFQELKNI…DVVDIIESNL (76 aa). At Ser39 the chain carries O-(pantetheine 4'-phosphoryl)serine.

This sequence belongs to the acyl carrier protein (ACP) family. Post-translationally, 4'-phosphopantetheine is transferred from CoA to a specific serine of apo-ACP by AcpS. This modification is essential for activity because fatty acids are bound in thioester linkage to the sulfhydryl of the prosthetic group.

Its subcellular location is the cytoplasm. Its pathway is lipid metabolism; fatty acid biosynthesis. Functionally, carrier of the growing fatty acid chain in fatty acid biosynthesis. This chain is Acyl carrier protein, found in Coprothermobacter proteolyticus (strain ATCC 35245 / DSM 5265 / OCM 4 / BT).